We begin with the raw amino-acid sequence, 508 residues long: Cyclin-A1-1 (508 aa).

Over residues 1-28 (MSSNLAASRRSSSSSSVAAAAAAKRPAV) the composition is skewed to low complexity. Disordered regions lie at residues 1–40 (MSSNLAASRRSSSSSSVAAAAAAKRPAVGEGGGGGGGKAA) and 82–125 (VKKG…ESVL). Over residues 29-39 (GEGGGGGGGKA) the composition is skewed to gly residues. Residues 98–111 (ASAVKSASAKPAPA) are compositionally biased toward low complexity.

This sequence belongs to the cyclin family. Cyclin AB subfamily. Expressed in the dividing region of the root cap and root apex. Expressed in the intercalary meristem of internodes and in adventitious roots under submergence conditions.

Its function is as follows. Involved in the control of the cell cycle at the G2/M (mitosis) transition. The chain is Cyclin-A1-1 (CYCA1-1) from Oryza sativa subsp. japonica (Rice).